Reading from the N-terminus, the 147-residue chain is UPF0306 protein YhbP (147 aa).

This sequence belongs to the UPF0306 family.

This Salmonella schwarzengrund (strain CVM19633) protein is UPF0306 protein YhbP.